A 248-amino-acid polypeptide reads, in one-letter code: Proteasome subunit alpha type-7 (248 aa).

S130 carries O-linked (GlcNAc) serine glycosylation. Y153 is subject to Phosphotyrosine; by ABL1 and ABL2. Residue K227 is modified to N6-acetyllysine.

It belongs to the peptidase T1A family. As to quaternary structure, the 26S proteasome consists of a 20S proteasome core and two 19S regulatory subunits. The 20S proteasome core is a barrel-shaped complex made of 28 subunits that are arranged in four stacked rings. The two outer rings are each formed by seven alpha subunits, and the two inner rings are formed by seven beta subunits. The proteolytic activity is exerted by three beta-subunits PSMB5, PSMB6 and PSMB7. PSMA7 interacts directly with the PSMG1-PSMG2 heterodimer which promotes 20S proteasome assembly. Interacts with HIF1A. Interacts with RAB7A. Interacts with PRKN. Interacts with ABL1 and ABL2. Interacts with EMAP2. Interacts with MAVS. Post-translationally, phosphorylation by ABL1 or ABL2 leads to an inhibition of proteasomal activity and cell cycle transition blocks. In terms of tissue distribution, detected in liver (at protein level).

It localises to the cytoplasm. It is found in the nucleus. Its function is as follows. Component of the 20S core proteasome complex involved in the proteolytic degradation of most intracellular proteins. This complex plays numerous essential roles within the cell by associating with different regulatory particles. Associated with two 19S regulatory particles, forms the 26S proteasome and thus participates in the ATP-dependent degradation of ubiquitinated proteins. The 26S proteasome plays a key role in the maintenance of protein homeostasis by removing misfolded or damaged proteins that could impair cellular functions, and by removing proteins whose functions are no longer required. Associated with the PA200 or PA28, the 20S proteasome mediates ubiquitin-independent protein degradation. This type of proteolysis is required in several pathways including spermatogenesis (20S-PA200 complex) or generation of a subset of MHC class I-presented antigenic peptides (20S-PA28 complex). The protein is Proteasome subunit alpha type-7 (Psma7) of Mus musculus (Mouse).